Here is a 121-residue protein sequence, read N- to C-terminus: Methylglyoxal synthase (121 aa).

An MGS-like domain is found at M1–N121. Residues H9, K13, T35 to T38, and S55 to G56 contribute to the substrate site. D61 serves as the catalytic Proton donor/acceptor. H88 contributes to the substrate binding site.

Belongs to the methylglyoxal synthase family.

The catalysed reaction is dihydroxyacetone phosphate = methylglyoxal + phosphate. Catalyzes the formation of methylglyoxal from dihydroxyacetone phosphate. The polypeptide is Methylglyoxal synthase (Carboxydothermus hydrogenoformans (strain ATCC BAA-161 / DSM 6008 / Z-2901)).